A 252-amino-acid polypeptide reads, in one-letter code: 2-succinyl-6-hydroxy-2,4-cyclohexadiene-1-carboxylate synthase (252 aa).

Belongs to the AB hydrolase superfamily. MenH family. In terms of assembly, monomer.

It carries out the reaction 5-enolpyruvoyl-6-hydroxy-2-succinyl-cyclohex-3-ene-1-carboxylate = (1R,6R)-6-hydroxy-2-succinyl-cyclohexa-2,4-diene-1-carboxylate + pyruvate. It participates in quinol/quinone metabolism; 1,4-dihydroxy-2-naphthoate biosynthesis; 1,4-dihydroxy-2-naphthoate from chorismate: step 3/7. The protein operates within quinol/quinone metabolism; menaquinone biosynthesis. Its function is as follows. Catalyzes a proton abstraction reaction that results in 2,5-elimination of pyruvate from 2-succinyl-5-enolpyruvyl-6-hydroxy-3-cyclohexene-1-carboxylate (SEPHCHC) and the formation of 2-succinyl-6-hydroxy-2,4-cyclohexadiene-1-carboxylate (SHCHC). The polypeptide is 2-succinyl-6-hydroxy-2,4-cyclohexadiene-1-carboxylate synthase (Shigella sonnei (strain Ss046)).